The chain runs to 616 residues: Ectonucleoside triphosphate diphosphohydrolase 4 (616 aa).

Residues Met1–Gln33 lie on the Cytoplasmic side of the membrane. The chain crosses the membrane as a helical span at residues Ile34–Ile54. The Lumenal portion of the chain corresponds to Arg55–Ser559. Catalysis depends on Glu222, which acts as the Proton acceptor. The cysteines at positions 368 and 395 are disulfide-linked. N-linked (GlcNAc...) asparagine glycans are attached at residues Asn404 and Asn407. A disulfide bridge links Cys461 with Cys490. The helical transmembrane segment at Phe560–Leu580 threads the bilayer. Residues Tyr581–Leu616 lie on the Cytoplasmic side of the membrane.

The protein belongs to the GDA1/CD39 NTPase family. The cofactor is Ca(2+). Mg(2+) is required as a cofactor. In terms of tissue distribution, ubiquitous. Highest expression in testis and lowest in bladder.

The protein resides in the cytoplasmic vesicle. The protein localises to the autophagosome membrane. It is found in the lysosome membrane. Its subcellular location is the golgi apparatus membrane. It carries out the reaction a ribonucleoside 5'-diphosphate + H2O = a ribonucleoside 5'-phosphate + phosphate + H(+). The catalysed reaction is a ribonucleoside 5'-triphosphate + H2O = a ribonucleoside 5'-diphosphate + phosphate + H(+). It catalyses the reaction UDP + H2O = UMP + phosphate + H(+). The enzyme catalyses UTP + H2O = UDP + phosphate + H(+). It carries out the reaction CTP + H2O = CDP + phosphate + H(+). The catalysed reaction is GDP + H2O = GMP + phosphate + H(+). It catalyses the reaction GTP + H2O = GDP + phosphate + H(+). The enzyme catalyses 5-methyl-UTP + H2O = 5-methyl-UDP + phosphate + H(+). Functionally, catalyzes the hydrolysis of nucleoside triphosphates and diphosphates in a calcium- or magnesium-dependent manner, with a preference for pyrimidines. Preferentially hydrolyzes UTP and TTP. AMP, ADP, ATP and UMP are not substrates. Preferentially activated by Ca(2+) over Mg(2+). Its function is as follows. Has a broad substrate specificity with the ability of cleaving all nucleotide di- and triphosphates with the exception of adenosine di- and triphosphate (ADP and ATP). Preferentially hydrolyzes CTP, UDP, CDP, GTP and GDP. Can use either Ca(2+) or Mg(2+) equally. The polypeptide is Ectonucleoside triphosphate diphosphohydrolase 4 (Homo sapiens (Human)).